We begin with the raw amino-acid sequence, 116 residues long: Large ribosomal subunit protein bL17 (116 aa).

It belongs to the bacterial ribosomal protein bL17 family. Part of the 50S ribosomal subunit. Contacts protein L32.

The protein is Large ribosomal subunit protein bL17 of Trichodesmium erythraeum (strain IMS101).